The chain runs to 211 residues: Large ribosomal subunit protein eL13 (211 aa).

Lysine 16 carries the N6-acetyllysine modification. 2 positions are modified to phosphoserine: serine 52 and serine 77. Residues lysine 123 and lysine 145 each participate in a glycyl lysine isopeptide (Lys-Gly) (interchain with G-Cter in SUMO2) cross-link. Lysine 174 participates in a covalent cross-link: Glycyl lysine isopeptide (Lys-Gly) (interchain with G-Cter in SUMO1); alternate. Residues lysine 174 and lysine 177 each participate in a glycyl lysine isopeptide (Lys-Gly) (interchain with G-Cter in SUMO2); alternate cross-link. Lysine 177 carries the post-translational modification N6-acetyllysine; alternate.

Belongs to the eukaryotic ribosomal protein eL13 family. Component of the 60S large ribosomal subunit (LSU).

The protein resides in the cytoplasm. Functionally, component of the ribosome, a large ribonucleoprotein complex responsible for the synthesis of proteins in the cell. The small ribosomal subunit (SSU) binds messenger RNAs (mRNAs) and translates the encoded message by selecting cognate aminoacyl-transfer RNA (tRNA) molecules. The large subunit (LSU) contains the ribosomal catalytic site termed the peptidyl transferase center (PTC), which catalyzes the formation of peptide bonds, thereby polymerizing the amino acids delivered by tRNAs into a polypeptide chain. The nascent polypeptides leave the ribosome through a tunnel in the LSU and interact with protein factors that function in enzymatic processing, targeting, and the membrane insertion of nascent chains at the exit of the ribosomal tunnel. As part of the LSU, it is probably required for its formation and the maturation of rRNAs. Plays a role in bone development. In Bos taurus (Bovine), this protein is Large ribosomal subunit protein eL13 (RPL13).